The chain runs to 855 residues: Potassium channel AKT2 (855 aa).

Residues 1 to 12 (MKTSSFESASSS) show a composition bias toward low complexity. The tract at residues 1 to 24 (MKTSSFESASSSGGSGGGGGGGGG) is disordered. At 1–75 (MKTSSFESAS…PLDSRYRCWD (75 aa)) the chain is on the cytoplasmic side. Gly residues predominate over residues 13–24 (GGSGGGGGGGGG). Residues 76 to 96 (TFMVVLVAYSAWVYPFEVAFM) traverse the membrane as a helical segment. Residues 97–105 (NASPKGGLE) are Extracellular-facing. The chain crosses the membrane as a helical span at residues 106–126 (VADIVVDLFFAVDIVLTFFVA). The Cytoplasmic portion of the chain corresponds to 127–149 (YIDSRTQLLVRDRRRIATRYLST). The chain crosses the membrane as a helical span at residues 150–170 (FFIMDVASTIPFQGLAYIVTG). The Extracellular segment spans residues 171-179 (EVRESPAFS). A helical; Voltage-sensor transmembrane segment spans residues 180–200 (LLGILRLWRLRKVKQFFTRLE). At 201-214 (KDIRFNYFWIRCAR) the chain is on the cytoplasmic side. Residues 215–235 (LIAVTLFLVHCAGCLYYLIAD) form a helical membrane-spanning segment. Residues 236–262 (RYPHREKTWIGAVIPDFQEASLWIRYT) lie on the Extracellular side of the membrane. Positions 263-282 (SSVYWSITTMTTVGYGDMHA) form an intramembrane region, pore-forming. The Extracellular portion of the chain corresponds to 283-285 (QNT). The chain crosses the membrane as a helical span at residues 286-306 (VEMIFNIFYMLFNLGLTAYLI). The Cytoplasmic segment spans residues 307–855 (GNMTNLVVEG…VASMDSVSGS (549 aa)). 391-511 (LFKGVSREVL…VVIIKNFLKH (121 aa)) is a binding site for a nucleoside 3',5'-cyclic phosphate. ANK repeat units follow at residues 536–565 (NIPCNLLTVAATGNSSFLEDLLKVGMDPDV), 569–598 (KGRTALHIAASKGYEDCVLVLLKQACNVNI), 602–631 (QGNTALWNAIAARHHKIFNILYHFARVSSP), 634–663 (AAGDLLCLAARRGDLDTLRELLKHGLAVDS), and 667–696 (DGATALRVALAEGHADVARLLVLNGASVDR). Residues 744-765 (EVGSSGDSRNGRRQSARSDGAH) form a disordered region. The KHA domain maps to 768–855 (RVSIYRGHPF…VASMDSVSGS (88 aa)).

It belongs to the potassium channel family. Plant (TC 1.A.1.4) subfamily. As to quaternary structure, the potassium channel is probably a homo- or heterotetrameric complex of pore-forming subunits.

The protein localises to the membrane. Probable inward-rectifying potassium channel. Assuming opened or closed conformations in response to the voltage difference across the membrane, the channel is activated by hyperpolarization. The chain is Potassium channel AKT2 from Oryza sativa subsp. japonica (Rice).